The following is a 29-amino-acid chain: Cytochrome b6-f complex subunit 8 (29 aa).

Residues 3–23 form a helical membrane-spanning segment; the sequence is IVSLAWAALMIVFTFSLSLVV.

This sequence belongs to the PetN family. In terms of assembly, the 4 large subunits of the cytochrome b6-f complex are cytochrome b6, subunit IV (17 kDa polypeptide, PetD), cytochrome f and the Rieske protein, while the 4 small subunits are PetG, PetL, PetM and PetN. The complex functions as a dimer.

Its subcellular location is the plastid membrane. Its function is as follows. Component of the cytochrome b6-f complex, which mediates electron transfer between photosystem II (PSII) and photosystem I (PSI), cyclic electron flow around PSI, and state transitions. The protein is Cytochrome b6-f complex subunit 8 of Cuscuta exaltata (Tall dodder).